The primary structure comprises 302 residues: Pentatricopeptide repeat-containing protein At4g38150 (302 aa).

Over residues 26–40 (SATRFLSTGDNGQVD) the composition is skewed to polar residues. Disordered stretches follow at residues 26 to 82 (SATR…TTLS) and 94 to 116 (VNQD…PPPE). Residues 54-67 (LRGERSSNSHREPP) are compositionally biased toward basic and acidic residues. 4 PPR repeats span residues 130 to 164 (LIPN…GTIP), 165 to 199 (EVVI…GIAP), 200 to 234 (NAFS…GHSP), and 235 to 269 (NVPT…GFAV).

Belongs to the PPR family. P subfamily.

This is Pentatricopeptide repeat-containing protein At4g38150 from Arabidopsis thaliana (Mouse-ear cress).